The sequence spans 336 residues: Dihydroorotate dehydrogenase (quinone) (336 aa).

FMN-binding positions include 62–66 and threonine 86; that span reads AGLDK. Residue lysine 66 participates in substrate binding. 111 to 115 is a substrate binding site; sequence NRMGF. FMN-binding residues include asparagine 139 and asparagine 172. Asparagine 172 contributes to the substrate binding site. Serine 175 acts as the Nucleophile in catalysis. Asparagine 177 is a substrate binding site. Residues lysine 217 and threonine 245 each contribute to the FMN site. 246–247 contacts substrate; the sequence is NT. Residues glycine 268, glycine 297, and 318-319 contribute to the FMN site; that span reads YS.

This sequence belongs to the dihydroorotate dehydrogenase family. Type 2 subfamily. As to quaternary structure, monomer. It depends on FMN as a cofactor.

It is found in the cell membrane. It carries out the reaction (S)-dihydroorotate + a quinone = orotate + a quinol. The protein operates within pyrimidine metabolism; UMP biosynthesis via de novo pathway; orotate from (S)-dihydroorotate (quinone route): step 1/1. Its function is as follows. Catalyzes the conversion of dihydroorotate to orotate with quinone as electron acceptor. The chain is Dihydroorotate dehydrogenase (quinone) from Salmonella typhi.